The chain runs to 489 residues: Protein LMBR1L (489 aa).

Topologically, residues 1-21 (MEAADYEVLSVREQLFHDRVR) are extracellular. Positions 1–59 (MEAADYEVLSVREQLFHDRVRECIISILLFATLYILCHIFLTRFKKPAEFTTVDDEDAT) are interaction with LGB. Residues 1-76 (MEAADYEVLS…LCTFTLAVAL (76 aa)) are LCN1-binding. Residues 22–42 (ECIISILLFATLYILCHIFLT) form a helical membrane-spanning segment. Residues 43–66 (RFKKPAEFTTVDDEDATVNKIALE) are Cytoplasmic-facing. Residues 67-87 (LCTFTLAVALGAVLLLPFSII) form a helical membrane-spanning segment. Residues 88–114 (SNEVLLSLPRNYYIQWLNGSLIHGLWN) lie on the Extracellular side of the membrane. Residues 115–135 (LVFLFSNLSLVFLMPFAYFFT) form a helical membrane-spanning segment. Residues 136–154 (ESEGFAGSRKGVLGRVYET) are Cytoplasmic-facing. The chain crosses the membrane as a helical span at residues 155–175 (VVMLILLTLLVLGMVWVASAI). The Extracellular portion of the chain corresponds to 176 to 196 (VDNDKASRESLYDFWEYYLPY). A helical transmembrane segment spans residues 197–217 (LYSCISFLGVLLLLVCTPLGL). At 218 to 305 (ARMFSVTGKL…NLGYPLAMLC (88 aa)) the chain is on the cytoplasmic side. The helical transmembrane segment at 306-326 (LLVLTGLSVLIVAVHILELLI) threads the bilayer. At 327 to 350 (DEAAMPRGMQDAALGQASFSKLGS) the chain is on the extracellular side. The chain crosses the membrane as a helical span at residues 351–371 (FGAIIQVVLIFYLMVSSVVGF). The Cytoplasmic segment spans residues 372–388 (YSSPLFGSLRPRWHDTS). The helical transmembrane segment at 389–409 (MTQIIGNCVCLLVLSSALPVF) threads the bilayer. The Extracellular portion of the chain corresponds to 410 to 431 (SRTLGLTRFDLLGDFGRFNWLG). The helical transmembrane segment at 432 to 452 (NFYIVFLYNAAFAGLTTLCLV) threads the bilayer. Topologically, residues 453–489 (KTFTAAVRAELIRAFGLDRLPLPVSGFPRASRKKQHQ) are cytoplasmic.

The protein belongs to the LIMR family. In terms of assembly, dimer. Can also form higher oligomers. Interacts with LCN1; this interaction mediates the endocytosis of LCN1. Interacts with UBAC2, FAF2, VCP, AMFR, ZNRF3, CTNNB1, LRP6, GSK3B, FZD6, DVL2 and RNF43. Interacts with GSK3A. Interaction with LGB and SCGB1A1 is controversial. Highly expressed in the bone marrow, thymus, spleen and lymphocytes.

It is found in the cell membrane. The protein localises to the endoplasmic reticulum membrane. Functionally, plays an essential role in lymphocyte development by negatively regulating the canonical Wnt signaling pathway. In association with UBAC2 and E3 ubiquitin-protein ligase AMFR, promotes the ubiquitin-mediated degradation of CTNNB1 and Wnt receptors FZD6 and LRP6. LMBR1L stabilizes the beta-catenin destruction complex that is required for regulating CTNNB1 levels. Acts as a LCN1 receptor and can mediate its endocytosis. The protein is Protein LMBR1L (Lmbr1l) of Mus musculus (Mouse).